We begin with the raw amino-acid sequence, 354 residues long: MNDSAHIDYARYDHIRPLLWTGDALELLDQRKLPFVVEHVRCDTSDAVAEAIHSLAVRGAPAIGIAAGWGVALAARDIAADDGNAALQKLEPALLRLNAARPTAVNLAWALMRMRRVLGAAGADWRAVIAREAQAIADEDLAANRHMGALGAALIAPGSGVLTHCNTGSLATAGFGTALGVIRAGMAQQRIAKVFAGETRPWLQGARLTVWELQQDGIDATLIADSAASHLMKSGLVQWVIVGADRICANGDTANKIGTYQLAIAARHHGVKFMVVAPSSTVDMATASGDQIEIEQRDPGELFGVGGVRTVADGIHAWNPVFDVTPGDLIDAIVTERGVIAQPDQARMQAAFGN.

Substrate contacts are provided by residues R58–A60, R101, and Q204. The active-site Proton donor is the D245. N255–K256 lines the substrate pocket.

The protein belongs to the eIF-2B alpha/beta/delta subunits family. MtnA subfamily.

It carries out the reaction 5-(methylsulfanyl)-alpha-D-ribose 1-phosphate = 5-(methylsulfanyl)-D-ribulose 1-phosphate. It functions in the pathway amino-acid biosynthesis; L-methionine biosynthesis via salvage pathway; L-methionine from S-methyl-5-thio-alpha-D-ribose 1-phosphate: step 1/6. In terms of biological role, catalyzes the interconversion of methylthioribose-1-phosphate (MTR-1-P) into methylthioribulose-1-phosphate (MTRu-1-P). This Xanthomonas oryzae pv. oryzae (strain MAFF 311018) protein is Methylthioribose-1-phosphate isomerase.